A 654-amino-acid chain; its full sequence is Peptide-N(4)-(N-acetyl-beta-glucosaminyl)asparagine amidase (654 aa).

At alanine 2 the chain carries N-acetylalanine. One can recognise a PUB domain in the interval glutamate 30–lysine 91. Positions arginine 112 to glutamate 123 are enriched in basic and acidic residues. The interval arginine 112–proline 167 is disordered. Residues serine 124 to proline 167 are compositionally biased toward polar residues. Threonine 137 is subject to Phosphothreonine. Zn(2+)-binding residues include cysteine 250, cysteine 253, cysteine 283, and cysteine 286. The active-site Nucleophile is the cysteine 309. Active-site residues include histidine 336 and aspartate 353. The 201-residue stretch at glutamate 454–leucine 654 folds into the PAW domain.

It belongs to the transglutaminase-like superfamily. PNGase family. In terms of assembly, component of a complex required to couple retrotranslocation, ubiquitination and deglycosylation composed of NGLY1, SAKS1, AMFR, VCP and RAD23B. Interacts with the proteasome components RAD23B and PSMC1. Interacts with directly with VCP. Interacts with DERL1, bringing it close to the endoplasmic reticulum membrane. Interacts with SAKS1. The cofactor is Zn(2+).

The protein resides in the cytoplasm. The enzyme catalyses Hydrolysis of an N(4)-(acetyl-beta-D-glucosaminyl)asparagine residue in which the glucosamine residue may be further glycosylated, to yield a (substituted) N-acetyl-beta-D-glucosaminylamine and a peptide containing an aspartate residue.. Its activity is regulated as follows. Inhibited by Z-VAD-fmk, a well-known caspase inhibitor, which inhibits enzyme activity through covalent binding of the carbohydrate to the single Cys-306 residue. Functionally, specifically deglycosylates the denatured form of N-linked glycoproteins in the cytoplasm and assists their proteasome-mediated degradation. Cleaves the beta-aspartyl-glucosamine (GlcNAc) of the glycan and the amide side chain of Asn, converting Asn to Asp. Prefers proteins containing high-mannose over those bearing complex type oligosaccharides. Can recognize misfolded proteins in the endoplasmic reticulum that are exported to the cytosol to be destroyed and deglycosylate them, while it has no activity toward native proteins. Deglycosylation is a prerequisite for subsequent proteasome-mediated degradation of some, but not all, misfolded glycoproteins. This Macaca fascicularis (Crab-eating macaque) protein is Peptide-N(4)-(N-acetyl-beta-glucosaminyl)asparagine amidase (NGLY1).